We begin with the raw amino-acid sequence, 531 residues long: DNA damage-binding protein cmr1 (531 aa).

2 disordered regions span residues 37–83 (GIFP…RGIA) and 218–264 (DASQ…MHIH). A compositionally biased stretch (basic residues) spans 53-64 (KPKKKPAPKKIK). Residues 186-227 (VTPERIYTMTFHPSEAKPLIFAGDKMGNLGVLDASQERPVSS) form a WD 1 repeat. A compositionally biased stretch (acidic residues) spans 233–245 (GDEEEQEDDDDPD). WD repeat units follow at residues 253–293 (PHTR…SVET), 300–340 (SDDV…RTAV), 345–385 (LSEK…HDDP), 392–431 (LSRL…ASWE), 454–497 (GRWV…LAQL), and 500–531 (DGIT…CLWM).

This sequence belongs to the WD repeat DDB2/WDR76 family.

Its function is as follows. DNA-binding protein that binds to both single- and double-stranded DNA. Binds preferentially to UV-damaged DNA. May be involved in DNA-metabolic processes. The sequence is that of DNA damage-binding protein cmr1 from Aspergillus clavatus (strain ATCC 1007 / CBS 513.65 / DSM 816 / NCTC 3887 / NRRL 1 / QM 1276 / 107).